Consider the following 363-residue polypeptide: Peptide chain release factor 1 (363 aa).

Gln-237 carries the post-translational modification N5-methylglutamine. Positions 286-296 (EKRRSAEESTR) are enriched in basic and acidic residues. Residues 286–305 (EKRRSAEESTRRSLVASGDR) are disordered.

The protein belongs to the prokaryotic/mitochondrial release factor family. In terms of processing, methylated by PrmC. Methylation increases the termination efficiency of RF1.

It is found in the cytoplasm. In terms of biological role, peptide chain release factor 1 directs the termination of translation in response to the peptide chain termination codons UAG and UAA. The sequence is that of Peptide chain release factor 1 from Shewanella baltica (strain OS155 / ATCC BAA-1091).